Reading from the N-terminus, the 353-residue chain is Photosystem II protein D1 (353 aa).

Residue Thr2 is modified to N-acetylthreonine. Thr2 bears the Phosphothreonine mark. A run of 3 helical transmembrane segments spans residues 29 to 46 (YIGWFGVLMIPTLLTATS), 118 to 133 (HFLLGVACYMGREWEL), and 142 to 156 (WIAVAYSAPVAAATA). His118 serves as a coordination point for chlorophyll a. Pheophytin a is bound at residue Tyr126. [CaMn4O5] cluster-binding residues include Asp170 and Glu189. A helical transmembrane segment spans residues 197 to 218 (FHMLGVAGVFGGSLFSAMHGSL). Position 198 (His198) interacts with chlorophyll a. Residues His215 and 264-265 (SF) each bind a quinone. A Fe cation-binding site is contributed by His215. His272 is a binding site for Fe cation. A helical membrane pass occupies residues 274–288 (FLAAWPVVGIWFTSL). 4 residues coordinate [CaMn4O5] cluster: His332, Glu333, Asp342, and Ala344. Positions 345-353 (AIDAPSVNG) are excised as a propeptide.

This sequence belongs to the reaction center PufL/M/PsbA/D family. In terms of assembly, PSII is composed of 1 copy each of membrane proteins PsbA, PsbB, PsbC, PsbD, PsbE, PsbF, PsbH, PsbI, PsbJ, PsbK, PsbL, PsbM, PsbT, PsbX, PsbY, PsbZ, Psb30/Ycf12, at least 3 peripheral proteins of the oxygen-evolving complex and a large number of cofactors. It forms dimeric complexes. The D1/D2 heterodimer binds P680, chlorophylls that are the primary electron donor of PSII, and subsequent electron acceptors. It shares a non-heme iron and each subunit binds pheophytin, quinone, additional chlorophylls, carotenoids and lipids. D1 provides most of the ligands for the Mn4-Ca-O5 cluster of the oxygen-evolving complex (OEC). There is also a Cl(-1) ion associated with D1 and D2, which is required for oxygen evolution. The PSII complex binds additional chlorophylls, carotenoids and specific lipids. serves as cofactor. Post-translationally, tyr-161 forms a radical intermediate that is referred to as redox-active TyrZ, YZ or Y-Z. In terms of processing, C-terminally processed by CTPA; processing is essential to allow assembly of the oxygen-evolving complex and thus photosynthetic growth.

Its subcellular location is the plastid. It is found in the chloroplast thylakoid membrane. It catalyses the reaction 2 a plastoquinone + 4 hnu + 2 H2O = 2 a plastoquinol + O2. Its function is as follows. Photosystem II (PSII) is a light-driven water:plastoquinone oxidoreductase that uses light energy to abstract electrons from H(2)O, generating O(2) and a proton gradient subsequently used for ATP formation. It consists of a core antenna complex that captures photons, and an electron transfer chain that converts photonic excitation into a charge separation. The D1/D2 (PsbA/PsbD) reaction center heterodimer binds P680, the primary electron donor of PSII as well as several subsequent electron acceptors. The chain is Photosystem II protein D1 from Coffea arabica (Arabian coffee).